The primary structure comprises 383 residues: MNPTLALTEDLIRRRSVTPADEGCQAILETRLKAIGFDCEALVSGPDDFRVTNLWAVKRGTQGKDGKLLVFAGHTDVVPTGPLEQWHSDPFAPTHRDGKLYGRGAADMKTSIAGFVVAVEEFVKAHPAHAGSIGFLITSDEEGPAHDGTIKVVEALSARGERLDYCVIGEPTSVNALGDMVKNGRRGSLSGKLTVKGIQCHIAYPHLGRNPIHDAAPALAELAAEVWDAGNEYFPPTSWQMSNIHGGTGATNVIPGHVTIDFNFRFSTASTPEGLKARVHAILDRHSLDYTLDWTLGGEPFLTPRGELSEALSSAIKAETGFDTELSTTGGTSDGRFIARICPQVIEFGPPNASIHKIDEHVEVRFIEPLKNVYRGVLERLIA.

Histidine 74 serves as a coordination point for Zn(2+). Aspartate 76 is an active-site residue. Aspartate 107 contacts Zn(2+). Catalysis depends on glutamate 141, which acts as the Proton acceptor. Zn(2+) contacts are provided by glutamate 142, glutamate 170, and histidine 356.

This sequence belongs to the peptidase M20A family. DapE subfamily. Homodimer. Requires Zn(2+) as cofactor. Co(2+) is required as a cofactor.

The enzyme catalyses N-succinyl-(2S,6S)-2,6-diaminopimelate + H2O = (2S,6S)-2,6-diaminopimelate + succinate. The protein operates within amino-acid biosynthesis; L-lysine biosynthesis via DAP pathway; LL-2,6-diaminopimelate from (S)-tetrahydrodipicolinate (succinylase route): step 3/3. Functionally, catalyzes the hydrolysis of N-succinyl-L,L-diaminopimelic acid (SDAP), forming succinate and LL-2,6-diaminopimelate (DAP), an intermediate involved in the bacterial biosynthesis of lysine and meso-diaminopimelic acid, an essential component of bacterial cell walls. The sequence is that of Succinyl-diaminopimelate desuccinylase from Cupriavidus taiwanensis (strain DSM 17343 / BCRC 17206 / CCUG 44338 / CIP 107171 / LMG 19424 / R1) (Ralstonia taiwanensis (strain LMG 19424)).